The following is a 64-amino-acid chain: SPbeta prophage-derived uncharacterized protein YoqI (64 aa).

This chain is SPbeta prophage-derived uncharacterized protein YoqI (yoqI), found in Bacillus subtilis (strain 168).